Here is a 169-residue protein sequence, read N- to C-terminus: T-cell receptor gamma chain C region DFL12 (169 aa).

Positions 1-136 are c region; it reads PSDKRLDADI…LQFMSTSAYY (136 aa). Residues 137–157 form a helical membrane-spanning segment; the sequence is TYLLLLLKSVIYLAIISFSLL. The Cytoplasmic portion of the chain corresponds to 158–169; the sequence is RRTSVCCNEKRS.

It localises to the membrane. This is T-cell receptor gamma chain C region DFL12 from Mus musculus (Mouse).